We begin with the raw amino-acid sequence, 438 residues long: GRAS family protein TF80 (438 aa).

Residues Leu-13–Lys-436 form the GRAS domain. The interval Ser-20–Val-81 is leucine repeat I (LRI). A VHIID region spans residues Gln-100 to Gly-165. A VHIID motif is present at residues Val-131–Asp-135. Residues Gln-175–Asn-207 form a leucine repeat II (LRII) region. The tract at residues Val-216 to Asn-359 is PFYRE. The short motif at Leu-224–Leu-228 is the LXXLL motif element. Residues Thr-362 to Lys-436 are SAW.

The protein belongs to the GRAS family. Interacts with RAM1.

It is found in the nucleus. The protein is GRAS family protein TF80 (TF80) of Medicago truncatula (Barrel medic).